Here is an 819-residue protein sequence, read N- to C-terminus: Myosin light chain kinase 3 (819 aa).

Disordered stretches follow at residues Val-146–Glu-256, Val-273–Arg-334, and Glu-347–Cys-462. At Ser-152 the chain carries Phosphoserine. 2 stretches are compositionally biased toward basic and acidic residues: residues Glu-158–Lys-170 and Asp-183–Val-196. The span at Gly-307–Leu-318 shows a compositional bias: pro residues. Phosphoserine is present on residues Ser-355, Ser-401, and Ser-408. The region spanning Val-515–Leu-770 is the Protein kinase domain. ATP is bound by residues Leu-521–Val-529 and Lys-544. The active-site Proton acceptor is the Asp-636.

This sequence belongs to the protein kinase superfamily. CAMK Ser/Thr protein kinase family. The cofactor is Mg(2+). Post-translationally, phosphorylated on serine residues. Restricted to heart.

Its subcellular location is the cytoplasm. The enzyme catalyses L-seryl-[myosin light chain] + ATP = O-phospho-L-seryl-[myosin light chain] + ADP + H(+). It catalyses the reaction L-threonyl-[myosin light chain] + ATP = O-phospho-L-threonyl-[myosin light chain] + ADP + H(+). In terms of biological role, kinase that phosphorylates MYL2 in vitro. Promotes sarcomere formation in cardiomyocytes and increases cardiomyocyte contractility. This is Myosin light chain kinase 3 (MYLK3) from Homo sapiens (Human).